The chain runs to 356 residues: uncharacterized protein (356 aa).

The disordered stretch occupies residues 25 to 72 (EENNQENNKKFIEEFYPDKESDKNFSDDDSDDSDDSDDSENSDEEFDN). The segment covering 31–50 (NNKKFIEEFYPDKESDKNFS) has biased composition (basic and acidic residues). A compositionally biased stretch (acidic residues) spans 51-70 (DDDSDDSDDSDDSENSDEEF). Residues 328–356 (EDTLNHSHSNKIKELENKITELKYQNEIN) adopt a coiled-coil conformation.

Belongs to the mimivirus L17/R827 family.

This is an uncharacterized protein from Acanthamoeba polyphaga mimivirus (APMV).